The chain runs to 314 residues: L-lactate dehydrogenase (314 aa).

Residues V16, D37, K42, Y68, and 82–83 contribute to the NAD(+) site; that span reads GV. Positions 85 and 91 each coordinate substrate. NAD(+) is bound by residues S104, 121-123, and T146; that span reads ASN. Position 123 to 126 (123 to 126) interacts with substrate; it reads NPVD. 151–154 contacts substrate; it reads DTTR. The beta-D-fructose 1,6-bisphosphate site is built by R156 and H171. H178 serves as the catalytic Proton acceptor. Y223 carries the phosphotyrosine modification. Residue T232 coordinates substrate.

It belongs to the LDH/MDH superfamily. LDH family. Homotetramer.

The protein localises to the cytoplasm. It catalyses the reaction (S)-lactate + NAD(+) = pyruvate + NADH + H(+). It participates in fermentation; pyruvate fermentation to lactate; (S)-lactate from pyruvate: step 1/1. Allosterically activated by fructose 1,6-bisphosphate (FBP). Its function is as follows. Catalyzes the conversion of lactate to pyruvate. This chain is L-lactate dehydrogenase, found in Lactococcus lactis subsp. cremoris (strain MG1363).